Reading from the N-terminus, the 112-residue chain is Frizzy aggregation protein FrzB (112 aa).

Functionally, necessary for proper aggregation of cells to form fruiting bodies. FRZ genes define a system of signal transduction analogous to the enterobacterial chemotaxis systems. The chain is Frizzy aggregation protein FrzB (frzB) from Myxococcus xanthus.